Consider the following 150-residue polypeptide: Nucleoside diphosphate kinase (150 aa).

K9, F57, R85, T91, R102, and N112 together coordinate ATP. The active-site Pros-phosphohistidine intermediate is H115.

This sequence belongs to the NDK family. Homotetramer. Mg(2+) serves as cofactor.

The protein resides in the cytoplasm. The enzyme catalyses a 2'-deoxyribonucleoside 5'-diphosphate + ATP = a 2'-deoxyribonucleoside 5'-triphosphate + ADP. It catalyses the reaction a ribonucleoside 5'-diphosphate + ATP = a ribonucleoside 5'-triphosphate + ADP. Its function is as follows. Major role in the synthesis of nucleoside triphosphates other than ATP. The ATP gamma phosphate is transferred to the NDP beta phosphate via a ping-pong mechanism, using a phosphorylated active-site intermediate. The sequence is that of Nucleoside diphosphate kinase from Symbiobacterium thermophilum (strain DSM 24528 / JCM 14929 / IAM 14863 / T).